A 1236-amino-acid polypeptide reads, in one-letter code: MNSGPACATADILVAPPPELRRSEPSSLLIRLLPVVMSVATVGVMVTVFLPGSPATRHPTFLAFPMMMLVSLVVTAVTGRGRRHVSGIHNDRVDYLGYLSVLRTSVTQTAAAQHVSLNWTHPDPATLWTLIGGPRMWERRPGAADFCRIRVGVGSAPLATRLVVGQLPPAQRADPVTRAALRCFLAAHATIADAPIAIPLRVGGPIAIDGDPTKVRGLLRAMICQLAVWHSPEELLIAGVVSDRNRAHWDWLKWLPHNQHPNACDALGPAPMVYSTLAEMQNALAATVLAHVVAIVDTAERGNGAITGVITIEVGARRDGAPPVVRCAGEVTALACPDQLEPQDALVCARRLAAHRVGHSGRTFIRGSGWAELVGIGDVAAFDPSTLWRNVNQHDRLRVPIGVTPDGTAVQLDIKEAAEQGMGPHGLCVGATGSGKSELLRTIALGMMARNSPEVLNLLLVDFKGGATFLDLAGAPHVAAVITNLAEEAPLVARMQDALAGEMSRRQQLLRMAGHLVSVTAYQRARQTGAQLPCLPILFIVVDEFSELLSQHPEFVDVFLAIGRVGRSLGMHLLLASQRLDEGRLRGLETHLSYRMCLKTWSASESRNVLGTQDAYQLPNTPGAGLLQTGTGELIRFQTAFVSGPLRRASPSAVHPVAPPSVRPFTTHAAAPVTAGPVGGTAEVPTPTVLHAVLDRLVGHGPAAHQVWLPPLDEPPMLGALLRDAEPAQAELAVPIGIVDRPFEQSRVPLTIDLSGAAGNVAVVGAPQTGKSTALRTLIMALAATHDAGRVQFYCLDFGGGALAQVDELPHVGAVAGRAQPQLASRMLAELESAVRFREAFFRDHGIDSVARYRQLRAKSAAESFADIFLVIDGWASLRQEFAALEESIVALAAQGLSFGVHVALSAARWAEIRPSLRDQIGSRIELRLADPADSELDRRQAQRVPVDRPGRGLSRDGMHMVIALPDLDGVALRRRSGDPVAPPIPLLPARVDYDSVVARAGDELGAHILLGLEERRGQPVAVDFGRHPHLLVLGDNECGKTAALRTLCREIVRTHTAARAQLLIVDFRHTLLDVIESEHMSGYVSSPAALGAKLSSLVDLLQARMPAPDVSQAQLRARSWWSGPDIYVVVDDYDLVAVSSGNPLMVLLEYLPHARDLGLHLVVARRSGGAARALFEPVLASLRDLGCRALLMSGRPDEGALFGSSRPMPLPPGRGILVTGAGDEQLVQVAWSPPP.

2 consecutive transmembrane segments (helical) span residues 32–52 (LLPVVMSVATVGVMVTVFLPG) and 59–79 (PTFLAFPMMMLVSLVVTAVTG). 3 FtsK domains span residues 407 to 607 (GTAV…SESR), 747 to 936 (RVPL…ADSE), and 1018 to 1201 (GQPV…DEGA). ATP contacts are provided by residues 430–437 (GATGSGKS), 765–772 (GAPQTGKS), and 1035–1042 (GDNECGKT).

In terms of assembly, part of the ESX-4 / type VII secretion system (T7SS), which is composed of cytosolic and membrane components.

Its subcellular location is the cell membrane. In Mycobacterium tuberculosis (strain ATCC 25618 / H37Rv), this protein is ESX-4 secretion system protein EccC4 (eccC4).